Consider the following 1385-residue polypeptide: MPQTYAGQKRIRKFYGKIREVLEMPNLIEVQKSSYDLFLKSGDQLEPMDGEGIKGVFQSVFPIKDFNETAILEFVKYELETPKFDVEECQQRDLTYAAPLKVTLRLIVFDIDEDTGAKSVKDIKEQDVFMGDMPLMTPNGTFVVNGTERVIVSQMHRSPGVFFDHDKGKTHSSGKLLFACRIIPYRGSWLDFEFDAKDIVFSRIDRRRKLPVTTLLYALGLDQEGIMDAYYDTVTFKMVKNKGWSTKFFPERVRGTRPTTDLVDAKTGEVIAEAGKKVTPRAVKKWIDEGSIENLLVPFDGIVGRFAAKDIINEETGAIYVEAGDELTWELDKAGEVSGGTLKELIDAGITEIPVLDIDNVNVGPYMRNTLAVDKNLNRESALMDIYRVMRPGEPPTVEAASNLFDQLFFDSERYDLSAVGRVKMNMRLDLDAEDTMRTLRKEDIISCIKALVELRDGRGDIDDIDHLGNRRVRSVGELMENQYRVGLLRMERAIKERMSSVEIDTVMPQDLINAKPAAAAVREFFGSSQLSQFMDQTNPLSEVTHKRRLSALGPGGLTRERAGFEVRDVHPTHYGRMCPIETPEGPNIGLINSLATYARVNKYGFIETPYRRVNDAVVSDDVVYMSATEEMRHTVAQANANLDDDGKFVNDMVNTRMSGEYTLNPREAIDLIDVSPKQLVSVAASLIPFLENDDANRALMGSNMQRQAVPLLQADAPFVGTGIESVVAKDSGAAIMAKRGGVIDQVDAQRIVIRATEDLELGDAGVDIYRLRKFQRSNQNTCINQRPLVKVGDKIGKGEVIADGPSTDIGELALGKNVIVAFMPWNGYNYEDSILISERISRDDVFTSIHIEEFEVAARDTKLGPEEITRDIPNVGEEALRNLDEAGIVYIGAEVEPGDILVGKITPKGESPMTPEEKLLRAIFGEKASDVRDTSLRVKPGDYGTIVEVRVFNRHGVEKDERALQIEREEVERLARDRDDELVILERNIYARLRGMIMGKTAVKGPKGVKPNTVIDEDLLDGQLSRGQWWQLALEDEKDAAHIEALNQQFDTQKRALDHRFEDKVEKVRRGDDLPPGVMKMVKVFIAVKRKLQPGDKMAGRHGNKGVISKVVPMEDMPFLADGTPVDFVLNPLGVPSRMNVGQILETHMGWAARGMGLQIDEALDEYRRSGDMTPVRDALKIAYGDDVYDDAFADRDEESLLEAAGNVTKGVPIATPVFDGAKEADVNDALIRAGFSTSGQSKLFDGRTGEQFAREVTVGVKYLLKLHHLVDDKIHARSTGPYSLVTQQPLGGKAQFGGQRFGEMEVWALEAYGAAYTLQEMLTVKSDDVAGRTKVYESIVKGEDNFEAGVPESFNVLVKEVRGLGLNMELLDAEDDEGGIAAE.

It belongs to the RNA polymerase beta chain family. The RNAP catalytic core consists of 2 alpha, 1 beta, 1 beta' and 1 omega subunit. When a sigma factor is associated with the core the holoenzyme is formed, which can initiate transcription.

The catalysed reaction is RNA(n) + a ribonucleoside 5'-triphosphate = RNA(n+1) + diphosphate. DNA-dependent RNA polymerase catalyzes the transcription of DNA into RNA using the four ribonucleoside triphosphates as substrates. The sequence is that of DNA-directed RNA polymerase subunit beta from Jannaschia sp. (strain CCS1).